We begin with the raw amino-acid sequence, 470 residues long: Amino-acid permease RocC (470 aa).

12 helical membrane passes run 18–38, 44–64, 90–110, 119–139, 159–179, 196–216, 243–263, 281–301, 338–358, 360–380, 409–429, and 433–453; these read FMIA…GFTI, LGAI…MLCL, GFMI…LELT, WLPS…IFLI, VAAI…LIDF, GLFP…NFSF, VIWR…AILP, IGIP…ILSV, ALLI…MAAE, VYLW…MSIC, LVPI…IFIP, and IGLY…HLSI.

This sequence belongs to the amino acid-polyamine-organocation (APC) superfamily.

It localises to the cell membrane. In terms of biological role, putative transport protein involved in arginine degradative pathway. Probably transports arginine or ornithine. This Bacillus subtilis (strain 168) protein is Amino-acid permease RocC (rocC).